A 245-amino-acid polypeptide reads, in one-letter code: Eukaryotic translation initiation factor 6 (245 aa).

At Y113 the chain carries Phosphotyrosine. T165 is modified (phosphothreonine). S166 bears the Phosphoserine mark. S174 and S175 each carry phosphoserine; by CK1. At S235 the chain carries Phosphoserine; by PKC. A phosphoserine mark is found at S239 and S243.

It belongs to the eIF-6 family. Monomer. Associates with the 60S ribosomal subunit. Interacts with RACK1. Interacts with DICER1, AGO2, TARBP2, MOV10 and RPL7A; they form a large RNA-induced silencing complex (RISC). Phosphorylation at Ser-174 and Ser-175 by CSNK1D/CK1 promotes nuclear export. In terms of processing, ufmylated by UFL1.

It localises to the cytoplasm. Its subcellular location is the nucleus. It is found in the nucleolus. In terms of biological role, binds to the 60S ribosomal subunit and prevents its association with the 40S ribosomal subunit to form the 80S initiation complex in the cytoplasm. Behaves as a stimulatory translation initiation factor downstream insulin/growth factors. Is also involved in ribosome biogenesis. Associates with pre-60S subunits in the nucleus and is involved in its nuclear export. Cytoplasmic release of TIF6 from 60S subunits and nuclear relocalization is promoted by a RACK1 (RACK1)-dependent protein kinase C activity. In tissues responsive to insulin, controls fatty acid synthesis and glycolysis by exerting translational control of adipogenic transcription factors such as CEBPB, CEBPD and ATF4 that have G/C rich or uORF in their 5'UTR. Required for ROS-dependent megakaryocyte maturation and platelets formation, controls the expression of mitochondrial respiratory chain genes involved in reactive oxygen species (ROS) synthesis. Involved in miRNA-mediated gene silencing by the RNA-induced silencing complex (RISC). Required for both miRNA-mediated translational repression and miRNA-mediated cleavage of complementary mRNAs by RISC. Modulates cell cycle progression and global translation of pre-B cells, its activation seems to be rate-limiting in tumorigenesis and tumor growth. The polypeptide is Eukaryotic translation initiation factor 6 (Bos taurus (Bovine)).